Consider the following 252-residue polypeptide: 2-succinyl-6-hydroxy-2,4-cyclohexadiene-1-carboxylate synthase (252 aa).

The protein belongs to the AB hydrolase superfamily. MenH family. As to quaternary structure, monomer.

It carries out the reaction 5-enolpyruvoyl-6-hydroxy-2-succinyl-cyclohex-3-ene-1-carboxylate = (1R,6R)-6-hydroxy-2-succinyl-cyclohexa-2,4-diene-1-carboxylate + pyruvate. Its pathway is quinol/quinone metabolism; 1,4-dihydroxy-2-naphthoate biosynthesis; 1,4-dihydroxy-2-naphthoate from chorismate: step 3/7. It functions in the pathway quinol/quinone metabolism; menaquinone biosynthesis. In terms of biological role, catalyzes a proton abstraction reaction that results in 2,5-elimination of pyruvate from 2-succinyl-5-enolpyruvyl-6-hydroxy-3-cyclohexene-1-carboxylate (SEPHCHC) and the formation of 2-succinyl-6-hydroxy-2,4-cyclohexadiene-1-carboxylate (SHCHC). This is 2-succinyl-6-hydroxy-2,4-cyclohexadiene-1-carboxylate synthase from Salmonella arizonae (strain ATCC BAA-731 / CDC346-86 / RSK2980).